The following is a 1936-amino-acid chain: Potassium channel K1 (1936 aa).

A run of 6 helical transmembrane segments spans residues 175–195, 598–618, 643–663, 670–690, 701–721, and 734–754; these read IIIL…YILL, VWII…LWAA, GYIE…GLYF, YIFS…SFIM, TYWF…AEST, and IIII…SGIM. Positions 772–788 form an intramembrane region, pore-forming; the sequence is FVYFGVITMSTVGYGDY. The helical transmembrane segment at 791 to 811 threads the bilayer; that stretch reads VTPAGKCLTMFIIVTCFTFVG. Residues 1141 to 1185 adopt a coiled-coil conformation; the sequence is DTSSMINYKSKSRVNYKMVKGTKNEFIRNQNYNINSIYYANNDNM.

It localises to the membrane. It carries out the reaction K(+)(in) = K(+)(out). With respect to regulation, partially inhibited by Ba(2+) and quinine. Probably insensitive to tetraethylammonium (TEA). Its function is as follows. Likely a predominant potassium channel in the erythrocytic stages of parasites. Mediates transmembrane potassium transport. Required for the development of oocysts in the mosquito midgut. The sequence is that of Potassium channel K1 from Plasmodium berghei (strain Anka).